The chain runs to 312 residues: tRNA-cytidine(32) 2-sulfurtransferase (312 aa).

The PP-loop motif motif lies at 48–53 (SGGKDS). [4Fe-4S] cluster contacts are provided by cysteine 123, cysteine 126, and cysteine 214.

It belongs to the TtcA family. Homodimer. It depends on Mg(2+) as a cofactor. [4Fe-4S] cluster serves as cofactor.

The protein resides in the cytoplasm. It carries out the reaction cytidine(32) in tRNA + S-sulfanyl-L-cysteinyl-[cysteine desulfurase] + AH2 + ATP = 2-thiocytidine(32) in tRNA + L-cysteinyl-[cysteine desulfurase] + A + AMP + diphosphate + H(+). It participates in tRNA modification. Functionally, catalyzes the ATP-dependent 2-thiolation of cytidine in position 32 of tRNA, to form 2-thiocytidine (s(2)C32). The sulfur atoms are provided by the cysteine/cysteine desulfurase (IscS) system. This chain is tRNA-cytidine(32) 2-sulfurtransferase, found in Mannheimia succiniciproducens (strain KCTC 0769BP / MBEL55E).